Reading from the N-terminus, the 160-residue chain is Thioredoxin-like protein 4A homolog (160 aa).

The tract at residues 132–160 is disordered; sequence KFLKKKKKKKNKKKQKKKIKKIKKKIKNN. Residues 133–160 show a composition bias toward basic residues; sequence FLKKKKKKKNKKKQKKKIKKIKKKIKNN.

The protein belongs to the DIM1 family. Component of the precatalytic spliceosome (spliceosome B complex). Component of the U5 snRNP complex. Component of the U4/U6-U5 tri-snRNP complex.

The protein resides in the nucleus. Its function is as follows. Plays a role in pre-mRNA splicing as component of the U5 snRNP and U4/U6-U5 tri-snRNP complexes that are involved in spliceosome assembly, and as component of the precatalytic spliceosome (spliceosome B complex). This is Thioredoxin-like protein 4A homolog (txnl4a) from Dictyostelium discoideum (Social amoeba).